The primary structure comprises 638 residues: Intron-encoded RNA maturase bI4 (638 aa).

Residues 1–253 are COB exons 1 to 4 encoded; the sequence is MAFRKSNVYL…VFYSPNTLGQ (253 aa). Positions 253–638 are COB intron 4 encoded; sequence QNMALLLITY…LKFNEKWNNN (386 aa).

This sequence in the C-terminal section; belongs to the LAGLIDADG endonuclease family. As to quaternary structure, forms a ternary complex with intron derived RNA and the imported mitochondrial leucyl-tRNA synthetase NAM2. The proteins do not interact directly with each other. In terms of processing, the mature protein may arise from proteolytic cleavage of an in-frame translation of COB exons 1 to 4 plus intron 4, containing the bI4 open reading frame. Cleavage would take place close to the Met-385 resulting in an active maturase of about 30 kDa.

The protein localises to the mitochondrion. Mitochondrial mRNA maturase required for splicing of intron 4 of the cytochrome b (COB) gene, containing its own coding sequence, and intron 4 in COX1, coding for the related homing endonuclease aI4. In vivo splicing requires in addition the imported mitochondrial leucyl-tRNA synthetase NAM2. Both proteins seem to stimulate the intrinsic ribozyme activity of intron bI4 through binding to and stabilizing specific secondary and tertiary structure elements in the RNA. This is Intron-encoded RNA maturase bI4 (BI4) from Saccharomyces cerevisiae (strain ATCC 204508 / S288c) (Baker's yeast).